Consider the following 478-residue polypeptide: Chromosomal replication initiator protein DnaA (478 aa).

The tract at residues 1–71 (MKEFWQTCVS…EALAAEWFQR (71 aa)) is domain I, interacts with DnaA modulators. The segment at 71–140 (RPVQVAFELP…DAAGVVYERS (70 aa)) is domain II. Residues 141–357 (RLNTDLTFDN…GALRKVLAYA (217 aa)) form a domain III, AAA+ region region. Positions 185, 187, 188, and 189 each coordinate ATP. The interval 358–478 (RFHGRDVLSV…LHVLEQTLKG (121 aa)) is domain IV, binds dsDNA.

The protein belongs to the DnaA family. Oligomerizes as a right-handed, spiral filament on DNA at oriC.

The protein resides in the cytoplasm. Its function is as follows. Plays an essential role in the initiation and regulation of chromosomal replication. ATP-DnaA binds to the origin of replication (oriC) to initiate formation of the DNA replication initiation complex once per cell cycle. Binds the DnaA box (a 9 base pair repeat at the origin) and separates the double-stranded (ds)DNA. Forms a right-handed helical filament on oriC DNA; dsDNA binds to the exterior of the filament while single-stranded (ss)DNA is stabiized in the filament's interior. The ATP-DnaA-oriC complex binds and stabilizes one strand of the AT-rich DNA unwinding element (DUE), permitting loading of DNA polymerase. After initiation quickly degrades to an ADP-DnaA complex that is not apt for DNA replication. Binds acidic phospholipids. This chain is Chromosomal replication initiator protein DnaA, found in Bordetella petrii (strain ATCC BAA-461 / DSM 12804 / CCUG 43448).